The sequence spans 593 residues: Arginine--tRNA ligase (593 aa).

Residues 123–133 (PNVAKPMHVGH) carry the 'HIGH' region motif.

The protein belongs to the class-I aminoacyl-tRNA synthetase family. As to quaternary structure, monomer.

It is found in the cytoplasm. The catalysed reaction is tRNA(Arg) + L-arginine + ATP = L-arginyl-tRNA(Arg) + AMP + diphosphate. This chain is Arginine--tRNA ligase, found in Phenylobacterium zucineum (strain HLK1).